We begin with the raw amino-acid sequence, 130 residues long: Small ribosomal subunit protein uS8 (130 aa).

The protein belongs to the universal ribosomal protein uS8 family. In terms of assembly, part of the 30S ribosomal subunit. Contacts proteins S5 and S12.

In terms of biological role, one of the primary rRNA binding proteins, it binds directly to 16S rRNA central domain where it helps coordinate assembly of the platform of the 30S subunit. In Coxiella burnetii (strain RSA 331 / Henzerling II), this protein is Small ribosomal subunit protein uS8.